The primary structure comprises 75 residues: Large ribosomal subunit protein bL31 (75 aa).

It belongs to the bacterial ribosomal protein bL31 family. Type A subfamily. In terms of assembly, part of the 50S ribosomal subunit.

Binds the 23S rRNA. The protein is Large ribosomal subunit protein bL31 of Bradyrhizobium sp. (strain BTAi1 / ATCC BAA-1182).